The primary structure comprises 384 residues: Cobalt-precorrin-5B C(1)-methyltransferase (384 aa).

This sequence belongs to the CbiD family.

The catalysed reaction is Co-precorrin-5B + S-adenosyl-L-methionine = Co-precorrin-6A + S-adenosyl-L-homocysteine. Its pathway is cofactor biosynthesis; adenosylcobalamin biosynthesis; cob(II)yrinate a,c-diamide from sirohydrochlorin (anaerobic route): step 6/10. Its function is as follows. Catalyzes the methylation of C-1 in cobalt-precorrin-5B to form cobalt-precorrin-6A. This Marinomonas sp. (strain MWYL1) protein is Cobalt-precorrin-5B C(1)-methyltransferase.